A 161-amino-acid chain; its full sequence is MRKKALIFTVIFGIIFLAVLLVSASIYKSAMAQKEEGHEAAAAEAKKETDLAHVDQVETFVGKEKYYVVKGTDKKGTALYVWVPADKKAKILSKEAKEGISEDKAAKIIKDEGLVSKQKEVHLAREGNVLLWEVTYLDKEGQYSLSYVDFTTGKILKNITP.

Residues 1–5 (MRKKA) lie on the Cytoplasmic side of the membrane. The helical transmembrane segment at 6–26 (LIFTVIFGIIFLAVLLVSASI) threads the bilayer. The Extracellular portion of the chain corresponds to 27–161 (YKSAMAQKEE…TGKILKNITP (135 aa)).

Interacts with the penicillin-binding protein PBP2A, a monofunctional transpeptidase.

The protein localises to the cell membrane. Functionally, required for normal cell shape. Plays an important role in cell wall elongation during exponential phase and spore outgrowth. Probably regulates the activity of the penicillin-binding protein PBP2A through a direct interaction. Not required for PBP2A activity, stability and localization. This is Probable cell wall elongation regulator TseB from Bacillus subtilis (strain 168).